Here is a 106-residue protein sequence, read N- to C-terminus: MVNIPKTRNTYCKGKGCRKHTIHKVTQYKSGRASLFAQGKRRYDRKQSGYGGQTKQVFHKKAKTTKKIVLKLECTVCKTKKQLPLKRCKHIELGGEKKQKGQALQF.

Belongs to the eukaryotic ribosomal protein eL42 family.

In Candida maltosa (Yeast), this protein is Large ribosomal subunit protein eL42Q (RIM-C).